A 257-amino-acid polypeptide reads, in one-letter code: tRNA pseudouridine synthase A (257 aa).

The active-site Nucleophile is aspartate 52. Tyrosine 111 provides a ligand contact to substrate.

This sequence belongs to the tRNA pseudouridine synthase TruA family. Homodimer.

The catalysed reaction is uridine(38/39/40) in tRNA = pseudouridine(38/39/40) in tRNA. Its function is as follows. Formation of pseudouridine at positions 38, 39 and 40 in the anticodon stem and loop of transfer RNAs. This Dinoroseobacter shibae (strain DSM 16493 / NCIMB 14021 / DFL 12) protein is tRNA pseudouridine synthase A.